Here is a 111-residue protein sequence, read N- to C-terminus: Nucleoid-associated protein NMC1380 (111 aa).

It belongs to the YbaB/EbfC family. In terms of assembly, homodimer.

The protein resides in the cytoplasm. Its subcellular location is the nucleoid. Its function is as follows. Binds to DNA and alters its conformation. May be involved in regulation of gene expression, nucleoid organization and DNA protection. The protein is Nucleoid-associated protein NMC1380 of Neisseria meningitidis serogroup C / serotype 2a (strain ATCC 700532 / DSM 15464 / FAM18).